Consider the following 337-residue polypeptide: Phosphate acyltransferase (337 aa).

Belongs to the PlsX family. Homodimer. Probably interacts with PlsY.

The protein resides in the cytoplasm. It catalyses the reaction a fatty acyl-[ACP] + phosphate = an acyl phosphate + holo-[ACP]. It participates in lipid metabolism; phospholipid metabolism. Functionally, catalyzes the reversible formation of acyl-phosphate (acyl-PO(4)) from acyl-[acyl-carrier-protein] (acyl-ACP). This enzyme utilizes acyl-ACP as fatty acyl donor, but not acyl-CoA. The polypeptide is Phosphate acyltransferase (Polynucleobacter necessarius subsp. necessarius (strain STIR1)).